We begin with the raw amino-acid sequence, 159 residues long: Ribosomal RNA large subunit methyltransferase H (159 aa).

S-adenosyl-L-methionine-binding positions include isoleucine 76, glycine 108, and 127–132 (FSKMTF).

It belongs to the RNA methyltransferase RlmH family. As to quaternary structure, homodimer.

The protein resides in the cytoplasm. The catalysed reaction is pseudouridine(1915) in 23S rRNA + S-adenosyl-L-methionine = N(3)-methylpseudouridine(1915) in 23S rRNA + S-adenosyl-L-homocysteine + H(+). Its function is as follows. Specifically methylates the pseudouridine at position 1915 (m3Psi1915) in 23S rRNA. The chain is Ribosomal RNA large subunit methyltransferase H from Clostridium botulinum (strain Loch Maree / Type A3).